Consider the following 489-residue polypeptide: Inositol-pentakisphosphate 2-kinase (489 aa).

The EXKPK motif signature appears at 136-140 (EIKPK).

The protein belongs to the IPK1 type 2 family. In terms of tissue distribution, in brain, it is expressed throughout the hippocampus (CA1, CA2, CA3 and dentate gyrus), inner layers of the cerebral cortex, and Purkinje cells of the cerebellum. In heart, it is expressed in cardiomyocytes but not in interstitial cells, blood vessels, or valves. Also expressed in testis.

It is found in the cytoplasm. The protein resides in the nucleus. The enzyme catalyses 1D-myo-inositol 1,3,4,5,6-pentakisphosphate + ATP = 1D-myo-inositol hexakisphosphate + ADP + H(+). Its function is as follows. Phosphorylates Ins(1,3,4,5,6)P5 at position 2 to form Ins(1,2,3,4,5,6)P6 (InsP6 or phytate). InsP6 is involved in many processes such as mRNA export, non-homologous end-joining, endocytosis, ion channel regulation. It also protects cells from TNF-alpha-induced apoptosis. This chain is Inositol-pentakisphosphate 2-kinase (Ippk), found in Mus musculus (Mouse).